The primary structure comprises 307 residues: Alpha N-terminal protein methyltransferase 1 (307 aa).

A compositionally biased stretch (low complexity) spans 38–51 (EPAPAPAAGSNGVA). The interval 38-60 (EPAPAPAAGSNGVAGEEEAGGGG) is disordered. Residues glycine 123, arginine 128, 145–147 (EPV), 179–180 (LQ), and glutamine 195 contribute to the S-adenosyl-L-methionine site.

It belongs to the methyltransferase superfamily. NTM1 family.

It catalyses the reaction N-terminal L-alanyl-L-prolyl-L-lysyl-[protein] + 3 S-adenosyl-L-methionine = N-terminal N,N,N-trimethyl-L-alanyl-L-prolyl-L-lysyl-[protein] + 3 S-adenosyl-L-homocysteine + 3 H(+). It carries out the reaction N-terminal L-seryl-L-prolyl-L-lysyl-[protein] + 3 S-adenosyl-L-methionine = N-terminal N,N,N-trimethyl-L-seryl-L-prolyl-L-lysyl-[protein] + 3 S-adenosyl-L-homocysteine + 3 H(+). The catalysed reaction is N-terminal L-prolyl-L-prolyl-L-lysyl-[protein] + 2 S-adenosyl-L-methionine = N-terminal N,N-dimethyl-L-prolyl-L-prolyl-L-lysyl-[protein] + 2 S-adenosyl-L-homocysteine + 2 H(+). Alpha-N-methyltransferase that methylates the N-terminus of target proteins containing the N-terminal motif [Ala/Pro/Ser]-Pro-Lys when the initiator Met is cleaved. Specifically catalyzes mono-, di- or tri-methylation of exposed alpha-amino group of Ala or Ser residue in the [Ala/Ser]-Pro-Lys motif and mono- or di-methylation of Pro in the Pro-Pro-Lys motif. This Oryza sativa subsp. japonica (Rice) protein is Alpha N-terminal protein methyltransferase 1.